The primary structure comprises 161 residues: ATP synthase subunit b 1 (161 aa).

A helical membrane pass occupies residues 5–25; sequence PETWVAIAFLLLMGVFAYVGV.

The protein belongs to the ATPase B chain family. In terms of assembly, F-type ATPases have 2 components, F(1) - the catalytic core - and F(0) - the membrane proton channel. F(1) has five subunits: alpha(3), beta(3), gamma(1), delta(1), epsilon(1). F(0) has three main subunits: a(1), b(2) and c(10-14). The alpha and beta chains form an alternating ring which encloses part of the gamma chain. F(1) is attached to F(0) by a central stalk formed by the gamma and epsilon chains, while a peripheral stalk is formed by the delta and b chains.

Its subcellular location is the cell inner membrane. F(1)F(0) ATP synthase produces ATP from ADP in the presence of a proton or sodium gradient. F-type ATPases consist of two structural domains, F(1) containing the extramembraneous catalytic core and F(0) containing the membrane proton channel, linked together by a central stalk and a peripheral stalk. During catalysis, ATP synthesis in the catalytic domain of F(1) is coupled via a rotary mechanism of the central stalk subunits to proton translocation. In terms of biological role, component of the F(0) channel, it forms part of the peripheral stalk, linking F(1) to F(0). This is ATP synthase subunit b 1 from Nitrobacter winogradskyi (strain ATCC 25391 / DSM 10237 / CIP 104748 / NCIMB 11846 / Nb-255).